A 383-amino-acid polypeptide reads, in one-letter code: BRISC and BRCA1-A complex member 2 (383 aa).

Met1 bears the N-acetylmethionine mark. Ser2 bears the Phosphoserine mark. UEV-like regions lie at residues 30–147 (DATN…TLLE) and 275–364 (IAAF…RAKA).

Belongs to the BABAM2 family. In terms of assembly, component of the ARISC complex, at least composed of UIMC1/RAP80, ABRAXAS1, BRCC3/BRCC36, BABAM2 and BABAM1/NBA1. Component of the BRCA1-A complex, at least composed of BRCA1, BARD1, UIMC1/RAP80, ABRAXAS1, BRCC3/BRCC36, BABAM2 and BABAM1/NBA1. In the BRCA1-A complex, interacts directly with ABRAXAS1, BRCC3/BRCC36 and BABAM1/NBA1. Binds polyubiquitin. Component of the BRISC complex, at least composed of ABRAXAS2, BRCC3/BRCC36, BABAM2 and BABAM1/NBA1. Identified in a complex with SHMT2 and the other subunits of the BRISC complex. Component of the BRCA1/BRCA2 containing complex (BRCC), which also contains BRCA1, BRCA2, BARD1, BRCC3/BRCC36 and RAD51. BRCC is a ubiquitin E3 ligase complex that enhances cellular survival following DNA damage. May interact with FAS and TNFRSF1A. In terms of tissue distribution, expressed in brain, heart, kidney, liver, lung, testis, germinal center B-cells and various mouse cell lines.

It localises to the cytoplasm. The protein resides in the nucleus. Functionally, component of the BRCA1-A complex, a complex that specifically recognizes 'Lys-63'-linked ubiquitinated histones H2A and H2AX at DNA lesions sites, leading to target the BRCA1-BARD1 heterodimer to sites of DNA damage at double-strand breaks (DSBs). The BRCA1-A complex also possesses deubiquitinase activity that specifically removes 'Lys-63'-linked ubiquitin on histones H2A and H2AX. In the BRCA1-A complex, it acts as an adapter that bridges the interaction between BABAM1/NBA1 and the rest of the complex, thereby being required for the complex integrity and modulating the E3 ubiquitin ligase activity of the BRCA1-BARD1 heterodimer. Probably also plays a role as a component of the BRISC complex, a multiprotein complex that specifically cleaves 'Lys-63'-linked ubiquitin. May regulate TNF-alpha signaling through its interactions with TNFRSF1A. In terms of biological role, component of the BRCA1-A complex, a complex that specifically recognizes 'Lys-63'-linked ubiquitinated histones H2A and H2AX at DNA lesions sites, leading to target the BRCA1-BARD1 heterodimer to sites of DNA damage at double-strand breaks (DSBs). The BRCA1-A complex also possesses deubiquitinase activity that specifically removes 'Lys-63'-linked ubiquitin on histones H2A and H2AX. In the BRCA1-A complex, it acts as an adapter that bridges the interaction between BABAM1/NBA1 and the rest of the complex, thereby being required for the complex integrity and modulating the E3 ubiquitin ligase activity of the BRCA1-BARD1 heterodimer. Component of the BRISC complex, a multiprotein complex that specifically cleaves 'Lys-63'-linked ubiquitin in various substrates. Within the BRISC complex, acts as an adapter that bridges the interaction between BABAM1/NBA1 and the rest of the complex, thereby being required for the complex integrity. The BRISC complex is required for normal mitotic spindle assembly and microtubule attachment to kinetochores via its role in deubiquitinating NUMA1. The BRISC complex plays a role in interferon signaling via its role in the deubiquitination of the interferon receptor IFNAR1; deubiquitination increases IFNAR1 activity by enhancing its stability and cell surface expression. Down-regulates the response to bacterial lipopolysaccharide (LPS) via its role in IFNAR1 deubiquitination. May play a role in homeostasis or cellular differentiation in cells of neural, epithelial and germline origins. May also act as a death receptor-associated anti-apoptotic protein, which inhibits the mitochondrial apoptotic pathway. May regulate TNF-alpha signaling through its interactions with TNFRSF1A; however these effects may be indirect. The sequence is that of BRISC and BRCA1-A complex member 2 (Babam2) from Mus musculus (Mouse).